A 204-amino-acid chain; its full sequence is uncharacterized protein (204 aa).

Residues 1–24 form the signal peptide; it reads MPINTFCKISLFICALFCSTVTLA.

This is an uncharacterized protein from Pasteurella multocida (strain Pm70).